Reading from the N-terminus, the 468-residue chain is Ribulose bisphosphate carboxylase large chain (468 aa).

The residue at position 7 (Lys-7) is an N6,N6,N6-trimethyllysine. Substrate-binding residues include Asn-116 and Thr-166. Lys-168 (proton acceptor) is an active-site residue. Lys-170 lines the substrate pocket. Mg(2+) is bound by residues Lys-194, Asp-196, and Glu-197. Lys-194 carries the N6-carboxylysine modification. Residue His-287 is the Proton acceptor of the active site. Residues Arg-288, His-320, and Ser-372 each contribute to the substrate site.

Belongs to the RuBisCO large chain family. Type I subfamily. Heterohexadecamer of 8 large chains and 8 small chains; disulfide-linked. The disulfide link is formed within the large subunit homodimers. Requires Mg(2+) as cofactor. The disulfide bond which can form in the large chain dimeric partners within the hexadecamer appears to be associated with oxidative stress and protein turnover.

It is found in the plastid. Its subcellular location is the chloroplast. The enzyme catalyses 2 (2R)-3-phosphoglycerate + 2 H(+) = D-ribulose 1,5-bisphosphate + CO2 + H2O. It catalyses the reaction D-ribulose 1,5-bisphosphate + O2 = 2-phosphoglycolate + (2R)-3-phosphoglycerate + 2 H(+). In terms of biological role, ruBisCO catalyzes two reactions: the carboxylation of D-ribulose 1,5-bisphosphate, the primary event in carbon dioxide fixation, as well as the oxidative fragmentation of the pentose substrate in the photorespiration process. Both reactions occur simultaneously and in competition at the same active site. The protein is Ribulose bisphosphate carboxylase large chain of Cornus alternifolia (Pagoda dogwood).